Reading from the N-terminus, the 631-residue chain is MSTWNPENDVDLLSGSEDEEDVSMKRDYHGREAILFVVDANLQTAGVERLLEALNIIRTAFISGLLVNDKDLIGLIFANTKHSPPPLEASALDNIVMPDNCAVFLPLRQLTKPIVEHYLEFMGGVETQFADVYGLAEPDGRGRFDLMIRLCIEMLEKCGKKLNNAKIAYVTDVREPHPSNSNHFQAALQKASDLEGKEFEFHVIPMVDDFDYEPFYKEFITLSRAIELDAFQVPDAQMLREILSDRKLKQDFLRRCLGHFSFYLGPNLSMSVQYYNYFQRRAYPRKVQILRRDNSVVRTKRVITVQKQKDDGSQDIEHEYQIKVTGGWYTCNVGERDLRISMDQLNRVRNLHKPQMMLLGFKHRSSLPEVSYIKPANFMYPDDQSIIGSKRLFRALWERCLVRDKIAICLFMCKRKSIPRYVALVPVEAPDNGEDKNYRSLLCGDGFKIVYLPEAKHIRHLDLQDWNNTENTADEQKVEFFQKIIKKLRVDYQPNLINDPSLDALQANLLALSLDFSTDTKGLDNLLDTSQQDKRIEKLLPDYEMFAPEAEPHKKRAAKSTTAGASGPKMAKIDDDQLKEFEFVKSLNKDEALTSCTAAQLHFILQHHFDVTMPKSSKKAKLVAKIEELHK.

A Ku domain is found at 262–487 (FYLGPNLSMS…VEFFQKIIKK (226 aa)). Residues 550 to 570 (AEPHKKRAAKSTTAGASGPKM) are disordered.

The protein belongs to the ku70 family. Heterodimer of a 70 kDa and a 80 kDa subunit.

It is found in the nucleus. The protein localises to the chromosome. It catalyses the reaction ATP + H2O = ADP + phosphate + H(+). In terms of biological role, single-stranded DNA-dependent ATP-dependent helicase. Involved in non-homologous end joining (NHEJ) DNA double strand break repair. Sequence-specific DNA-binding protein that has a high affinity for a 31 bp sequence in the Yp1 gene. Site-specific DNA binding to 31 bp P element inverted repeats. In Drosophila melanogaster (Fruit fly), this protein is ATP-dependent DNA helicase 2 subunit 1 (Irbp).